The primary structure comprises 88 residues: Small ribosomal subunit protein bS20 (88 aa).

A disordered region spans residues 1–27; it reads MANIKSQIKRNKTNEKARLRNKAVKSS.

It belongs to the bacterial ribosomal protein bS20 family.

Functionally, binds directly to 16S ribosomal RNA. This is Small ribosomal subunit protein bS20 from Streptomyces griseus subsp. griseus (strain JCM 4626 / CBS 651.72 / NBRC 13350 / KCC S-0626 / ISP 5235).